We begin with the raw amino-acid sequence, 2141 residues long: Oxygen-regulated protein 1 (2141 aa).

Residues 1-10 (MSETSSTSVS) are compositionally biased toward polar residues. A disordered region spans residues 1–20 (MSETSSTSVSMIHRSFEGQG). In terms of domain architecture, Doublecortin 1 spans 34–116 (KKISFYKSGD…RRKVQPVDLD (83 aa)). The disordered stretch occupies residues 126–149 (LSSRAISAHAQRSPPTSIGAAGAP). In terms of domain architecture, Doublecortin 2 spans 156–235 (RRLLVFRNGD…REPFKPGNYD (80 aa)). 3 disordered regions span residues 259-278 (RSES…SQIY), 1432-1458 (YTSS…SSER), and 1589-1612 (DWSE…GPNG). The segment covering 268–278 (HVPSSPRSQIY) has biased composition (polar residues). Residues 1435-1444 (SDKEDSKTSE) are compositionally biased toward basic and acidic residues. 2 stretches are compositionally biased toward polar residues: residues 1448–1458 (SITNSMTSSER) and 1598–1610 (ENEQ…SDGP).

As to quaternary structure, interacts (via the doublecortin domains) with microtubules. Interacts with RP1L1. Interacts with MAK.

Its subcellular location is the cytoplasm. It localises to the cytoskeleton. It is found in the cilium axoneme. The protein resides in the cell projection. The protein localises to the cilium. Its subcellular location is the photoreceptor outer segment. Functionally, microtubule-associated protein regulating the stability and length of the microtubule-based axoneme of photoreceptors. Required for the differentiation of photoreceptor cells, it plays a role in the organization of the outer segment of rod and cone photoreceptors ensuring the correct orientation and higher-order stacking of outer segment disks along the photoreceptor axoneme. The protein is Oxygen-regulated protein 1 (RP1) of Canis lupus familiaris (Dog).